Consider the following 263-residue polypeptide: Undecaprenyl-diphosphatase (263 aa).

7 helical membrane passes run 38–58 (RSDF…CLAL), 75–95 (RDYV…GLIV), 108–128 (PVAW…HFAG), 135–155 (VVTW…GVFP), 181–201 (FVFM…LLEM), 217–237 (VAFI…LGYI), and 242–262 (FTVF…WLPA).

This sequence belongs to the UppP family.

The protein resides in the cell inner membrane. The enzyme catalyses di-trans,octa-cis-undecaprenyl diphosphate + H2O = di-trans,octa-cis-undecaprenyl phosphate + phosphate + H(+). In terms of biological role, catalyzes the dephosphorylation of undecaprenyl diphosphate (UPP). Confers resistance to bacitracin. This is Undecaprenyl-diphosphatase from Xanthomonas campestris pv. campestris (strain 8004).